A 182-amino-acid polypeptide reads, in one-letter code: Nucleoside triphosphate/diphosphate phosphatase (182 aa).

The active-site Proton donor is the Arg-27. Mg(2+) contacts are provided by Asn-91, Asp-107, Asp-109, Asp-111, Asp-124, and Glu-127.

Belongs to the Ntdp family. The cofactor is Mg(2+).

The enzyme catalyses a ribonucleoside 5'-triphosphate + H2O = a ribonucleoside 5'-diphosphate + phosphate + H(+). The catalysed reaction is a ribonucleoside 5'-diphosphate + H2O = a ribonucleoside 5'-phosphate + phosphate + H(+). Its function is as follows. Has nucleoside phosphatase activity towards nucleoside triphosphates and nucleoside diphosphates. This is Nucleoside triphosphate/diphosphate phosphatase from Lactiplantibacillus plantarum (strain ATCC BAA-793 / NCIMB 8826 / WCFS1) (Lactobacillus plantarum).